A 296-amino-acid polypeptide reads, in one-letter code: ATP phosphoribosyltransferase (296 aa).

Belongs to the ATP phosphoribosyltransferase family.

The protein resides in the cytoplasm. The enzyme catalyses 1-(5-phospho-beta-D-ribosyl)-ATP + diphosphate = 5-phospho-alpha-D-ribose 1-diphosphate + ATP. Its pathway is amino-acid biosynthesis; L-histidine biosynthesis; L-histidine from 5-phospho-alpha-D-ribose 1-diphosphate: step 1/9. Functionally, catalyzes the condensation of ATP and 5-phosphoribose 1-diphosphate to form N'-(5'-phosphoribosyl)-ATP (PR-ATP). Has a crucial role in the pathway because the rate of histidine biosynthesis seems to be controlled primarily by regulation of the enzymatic activity. This is ATP phosphoribosyltransferase (HIS1) from Yarrowia lipolytica (strain CLIB 122 / E 150) (Yeast).